The chain runs to 455 residues: uncharacterized protein (455 aa).

12 consecutive transmembrane segments (helical) span residues 19–39, 63–83, 106–126, 140–160, 173–195, 200–222, 265–285, 288–308, 324–344, 348–368, 388–408, and 410–430; these read FSLFSLTWPIFIEVSLYMFMG, ILNLIIVMFSFIATGTTVIIS, FFISLAISAVVFFAAVPLLHM, FLQVVGGLSFIQALIMTFSAI, VTIGMNILNIAGNFVVIFGLFGF, VAGVAMSTSIARVIGLIAMIVIV, MIVTYFIAIMGAQALTTKVYT, ITMFILLFGTAISQGTQILIG, MKSLYWALGIAAATSVLMTIF, LIGLFTQSPDIIATASLLIAM, AAGDAKFPVYMAMISMWGIGL, and LAYLFGIHLGFGLAGIWISFI.

Belongs to the multi antimicrobial extrusion (MATE) (TC 2.A.66.1) family.

The protein resides in the cell membrane. This is an uncharacterized protein from Bacillus subtilis (strain 168).